The following is a 158-amino-acid chain: MDIQIIDETKIVPEAQIKLVEDVLEFAGQKLELAEDTEMSVTFVTNERIRQINQEYRNTDRATDVISFAIEEDPEEEGLPANFEELFDIPKNIGDLFVSLEKAAEQAETYGHSFERELGYTMVHGFLHLNGYDHIHTEDEVKMIPLQETILDEFGLKR.

Zn(2+) contacts are provided by His124, His128, and His134.

This sequence belongs to the endoribonuclease YbeY family. Zn(2+) serves as cofactor.

The protein resides in the cytoplasm. Functionally, single strand-specific metallo-endoribonuclease involved in late-stage 70S ribosome quality control and in maturation of the 3' terminus of the 16S rRNA. This Latilactobacillus sakei subsp. sakei (strain 23K) (Lactobacillus sakei subsp. sakei) protein is Endoribonuclease YbeY.